The sequence spans 975 residues: Monofunctional C1-tetrahydrofolate synthase, mitochondrial (975 aa).

The N-terminal 30 residues, 1–30 (MSARLPFVLRRLARPQHPGSPRRLPSLCRA), are a transit peptide targeting the mitochondrion. Positions 13–45 (ARPQHPGSPRRLPSLCRASSGRGSGCGGGEGLL) are disordered. The interval 31 to 345 (SSGRGSGCGG…REQQHRRWRL (315 aa)) is methylenetetrahydrofolate dehydrogenase and cyclohydrolase. The span at 34–44 (RGSGCGGGEGL) shows a compositional bias: gly residues. Lys187 is subject to N6-acetyllysine; alternate. The residue at position 187 (Lys187) is an N6-succinyllysine; alternate. The interval 346 to 975 (HCLKLQPLSP…TETEQVKGLF (630 aa)) is formyltetrahydrofolate synthetase. Ser354 is modified (phosphoserine). ATP is bound at residue 420–427 (TPLGEGKS). Lys593 carries the N6-succinyllysine modification.

The protein in the N-terminal section; belongs to the tetrahydrofolate dehydrogenase/cyclohydrolase family. It in the C-terminal section; belongs to the formate--tetrahydrofolate ligase family. Homodimer.

The protein resides in the mitochondrion. The catalysed reaction is (6S)-5,6,7,8-tetrahydrofolate + formate + ATP = (6R)-10-formyltetrahydrofolate + ADP + phosphate. Its pathway is one-carbon metabolism; tetrahydrofolate interconversion. Functionally, may provide the missing metabolic reaction required to link the mitochondria and the cytoplasm in the mammalian model of one-carbon folate metabolism complementing thus the enzymatic activities of MTHFD2. In Bos taurus (Bovine), this protein is Monofunctional C1-tetrahydrofolate synthase, mitochondrial (MTHFD1L).